The following is a 198-amino-acid chain: Probable GTP-binding protein EngB (198 aa).

The region spanning 22–195 (DLPEIALAGR…WKAIHKFTKT (174 aa)) is the EngB-type G domain. Residues 30–37 (GRSNVGKS), 57–61 (GKTQT), 75–78 (DVPG), 142–145 (TKAD), and 174–176 (FSS) each bind GTP. Mg(2+) contacts are provided by Ser-37 and Thr-59.

It belongs to the TRAFAC class TrmE-Era-EngA-EngB-Septin-like GTPase superfamily. EngB GTPase family. It depends on Mg(2+) as a cofactor.

Necessary for normal cell division and for the maintenance of normal septation. In Bacillus cereus (strain B4264), this protein is Probable GTP-binding protein EngB.